Here is a 489-residue protein sequence, read N- to C-terminus: Pup--protein ligase (489 aa).

Glu-25 is a Mg(2+) binding site. Residue Arg-69 participates in ATP binding. Tyr-71 lines the Mg(2+) pocket. The Proton acceptor role is filled by Asp-73. Glu-79 contacts Mg(2+). Residues Thr-82 and Trp-447 each coordinate ATP.

This sequence belongs to the Pup ligase/Pup deamidase family. Pup-conjugating enzyme subfamily.

It catalyses the reaction ATP + [prokaryotic ubiquitin-like protein]-L-glutamate + [protein]-L-lysine = ADP + phosphate + N(6)-([prokaryotic ubiquitin-like protein]-gamma-L-glutamyl)-[protein]-L-lysine.. It participates in protein degradation; proteasomal Pup-dependent pathway. Its pathway is protein modification; protein pupylation. Its function is as follows. Catalyzes the covalent attachment of the prokaryotic ubiquitin-like protein modifier Pup to the proteasomal substrate proteins, thereby targeting them for proteasomal degradation. This tagging system is termed pupylation. The ligation reaction involves the side-chain carboxylate of the C-terminal glutamate of Pup and the side-chain amino group of a substrate lysine. The polypeptide is Pup--protein ligase (Corynebacterium efficiens (strain DSM 44549 / YS-314 / AJ 12310 / JCM 11189 / NBRC 100395)).